A 536-amino-acid polypeptide reads, in one-letter code: Protein scd2/ral3 (536 aa).

Residues 24-86 form the SH3 1 domain; sequence PPRKVIRALY…PVSHFEEIGK (63 aa). The disordered stretch occupies residues 88 to 115; sequence VKSERDSDGSGQISFTDLTTNSSTTRSS. Positions 101–115 are enriched in low complexity; that stretch reads SFTDLTTNSSTTRSS. Positions 123 to 185 constitute an SH3 2 domain; the sequence is SQPLFGIVQF…PLSFIQLRDL (63 aa). Residues 293–413 enclose the PX domain; that stretch reads SSEPTVVAAM…LFFLPLDGDV (121 aa). The 75-residue stretch at 459–533 folds into the PB1 domain; sequence TCKVKVRLGD…ESGVLLFAER (75 aa).

In terms of assembly, scd1, scd2, cdc42, and ras1, in its GTP-bound state, act cooperatively to form a protein complex.

In terms of biological role, required for mating and morphogenesis. Interacts directly with scd1 and with cdc42. May bridge and facilitate scd1 and cdc42 interactions. The polypeptide is Protein scd2/ral3 (scd2) (Schizosaccharomyces pombe (strain 972 / ATCC 24843) (Fission yeast)).